The chain runs to 146 residues: Large ribosomal subunit protein uL15 (146 aa).

Over residues 1–13 (MKLHELRPAEGSR) the composition is skewed to basic and acidic residues. Residues 1 to 55 (MKLHELRPAEGSRKSPKRVGRGTGSGLGKTSARGENGQNSRSGGGVRPGFEGGQM) form a disordered region. The segment covering 42 to 52 (SGGGVRPGFEG) has biased composition (gly residues).

It belongs to the universal ribosomal protein uL15 family. Part of the 50S ribosomal subunit.

In terms of biological role, binds to the 23S rRNA. This Clostridium tetani (strain Massachusetts / E88) protein is Large ribosomal subunit protein uL15.